A 159-amino-acid polypeptide reads, in one-letter code: Transcriptional repressor NrdR (159 aa).

Residues 3-34 (CPTCQNTDSRVLESRSADTGKSVRRRRECLNC) fold into a zinc finger. The ATP-cone domain maps to 49-139 (ISVLKKDGSR…VYRKFNGVKD (91 aa)).

The protein belongs to the NrdR family. The cofactor is Zn(2+).

Functionally, negatively regulates transcription of bacterial ribonucleotide reductase nrd genes and operons by binding to NrdR-boxes. The protein is Transcriptional repressor NrdR of Prochlorococcus marinus (strain MIT 9515).